The chain runs to 459 residues: Methylenetetrahydrofolate--tRNA-(uracil-5-)-methyltransferase TrmFO (459 aa).

Glycine 15–glycine 20 serves as a coordination point for FAD.

Belongs to the MnmG family. TrmFO subfamily. The cofactor is FAD.

The protein localises to the cytoplasm. It catalyses the reaction uridine(54) in tRNA + (6R)-5,10-methylene-5,6,7,8-tetrahydrofolate + NADH + H(+) = 5-methyluridine(54) in tRNA + (6S)-5,6,7,8-tetrahydrofolate + NAD(+). The enzyme catalyses uridine(54) in tRNA + (6R)-5,10-methylene-5,6,7,8-tetrahydrofolate + NADPH + H(+) = 5-methyluridine(54) in tRNA + (6S)-5,6,7,8-tetrahydrofolate + NADP(+). Its function is as follows. Catalyzes the folate-dependent formation of 5-methyl-uridine at position 54 (M-5-U54) in all tRNAs. In Syntrophotalea carbinolica (strain DSM 2380 / NBRC 103641 / GraBd1) (Pelobacter carbinolicus), this protein is Methylenetetrahydrofolate--tRNA-(uracil-5-)-methyltransferase TrmFO.